Here is a 468-residue protein sequence, read N- to C-terminus: MSLITAGRLCARILGAKNSPCALIAARQASSSANLKDVLSDLIPKEQTRIKNFRQQYGKNVIGQITVDMMYGGMRGMKGLVYETSVLDPDEGIRFRGYSIPECQKLLPKAPGGEEPLPEGLFWLLVTGEAPSQEQVNWISKEWAKRAALPSHVVTMLDNFPTNLHPMSQLSAAITALNSESNFARGYAEGVNKTKYWELIYEDSMDLIAKLPCVAAKIYRNLYREGSSIGAIDSNLDWSHNFTNMLGYTDPQFTELMRLYLTIHSDHEGGNVSAHTSHLVGSALSDPYLSFSAAMNGLAGPLHGLANQEVLVWLTSLQKDLGGEVSDEKLRDYIWNTLNSGRVVPGYGHAVLRKTDPRYTCQREFALKHLPNDPMFKLVAQLYKIVPNVLLEQGKAKNPWPNVDAHSGVLLQYYGMKEMNYYTVLFGVSRALGVLAQLIWSRALGFPLERPKSMSTDGLMQLVGSKSG.

The transit peptide at 1 to 30 (MSLITAGRLCARILGAKNSPCALIAARQAS) directs the protein to the mitochondrion. Residues His-303 and His-349 contribute to the active site. An oxaloacetate-binding site is contributed by Arg-358. Asp-404 is a catalytic residue. Residues Arg-430 and Arg-450 each coordinate oxaloacetate.

Belongs to the citrate synthase family. Homodimer.

The protein resides in the mitochondrion matrix. It carries out the reaction oxaloacetate + acetyl-CoA + H2O = citrate + CoA + H(+). It functions in the pathway carbohydrate metabolism; tricarboxylic acid cycle; isocitrate from oxaloacetate: step 1/2. In terms of biological role, key enzyme of the Krebs tricarboxylic acid cycle which catalyzes the synthesis of citrate from acetyl coenzyme A and oxaloacetate. This chain is Citrate synthase, mitochondrial (cs), found in Xenopus tropicalis (Western clawed frog).